The primary structure comprises 145 residues: Ribosomal RNA large subunit methyltransferase H (145 aa).

S-adenosyl-L-methionine contacts are provided by residues Leu64, Gly93, and Leu112 to Phe117.

Belongs to the RNA methyltransferase RlmH family. Homodimer.

Its subcellular location is the cytoplasm. The catalysed reaction is pseudouridine(1915) in 23S rRNA + S-adenosyl-L-methionine = N(3)-methylpseudouridine(1915) in 23S rRNA + S-adenosyl-L-homocysteine + H(+). Specifically methylates the pseudouridine at position 1915 (m3Psi1915) in 23S rRNA. In Prochlorococcus marinus (strain NATL2A), this protein is Ribosomal RNA large subunit methyltransferase H.